The chain runs to 630 residues: tRNA uridine 5-carboxymethylaminomethyl modification enzyme MnmG (630 aa).

Residues 14–19 (GAGHAG), valine 126, and serine 181 contribute to the FAD site. 273–287 (GPRYCPSIEDKVVRF) provides a ligand contact to NAD(+). Glutamine 370 is a binding site for FAD.

The protein belongs to the MnmG family. In terms of assembly, homodimer. Heterotetramer of two MnmE and two MnmG subunits. FAD serves as cofactor.

It localises to the cytoplasm. In terms of biological role, NAD-binding protein involved in the addition of a carboxymethylaminomethyl (cmnm) group at the wobble position (U34) of certain tRNAs, forming tRNA-cmnm(5)s(2)U34. This Alkaliphilus metalliredigens (strain QYMF) protein is tRNA uridine 5-carboxymethylaminomethyl modification enzyme MnmG.